Consider the following 289-residue polypeptide: Iodotyrosine deiodinase 1 (289 aa).

Residues 1 to 21 (MFLLTPVLVAVVCILMVWIFK) traverse the membrane as a helical segment. Residues 100–104 (RRSVR) and 128–129 (SG) contribute to the FMN site. Positions 130, 157, 161, and 182 each coordinate 3,5-diiodo-L-tyrosine. 3-iodo-L-tyrosine is bound by residues Ala-130, Glu-157, Tyr-161, and Lys-182. FMN-binding positions include 237–239 (TTT) and Arg-279.

It belongs to the nitroreductase family. Homodimer. The cofactor is FMN. Detected in thyroid (at protein level).

Its subcellular location is the cell membrane. It localises to the cytoplasmic vesicle membrane. It carries out the reaction 2 iodide + L-tyrosine + 2 NADP(+) = 3,5-diiodo-L-tyrosine + 2 NADPH + H(+). It catalyses the reaction iodide + L-tyrosine + NADP(+) = 3-iodo-L-tyrosine + NADPH. The enzyme catalyses 3-iodo-L-tyrosine + iodide + NADP(+) = 3,5-diiodo-L-tyrosine + NADPH + H(+). The catalysed reaction is L-tyrosine + chloride + NADP(+) = 3-chloro-L-tyrosine + NADPH. It carries out the reaction bromide + L-tyrosine + NADP(+) = 3-bromo-L-tyrosine + NADPH. Its function is as follows. Catalyzes the dehalogenation of halotyrosines such as 3-bromo-L-tyrosine, 3-chloro-L-tyrosine, 3-iodo-L-tyrosine and 3,5-diiodo-L-tyrosine. During thyroid hormone biosynthesis, facilitates iodide salvage by catalysing the oxidative NADPH-dependent deiodination of the halogenated by-products of thyroid hormone production, monoiodotyrosine (L-MIT) and diiodotyrosine (L-DIT). The scavanged iodide can then reenter the hormone-producing pathways. Acts more efficiently on 3-iodo-L-tyrosine than 3,5-diiodo-L-tyrosine. This chain is Iodotyrosine deiodinase 1 (IYD), found in Sus scrofa (Pig).